The primary structure comprises 308 residues: Methionyl-tRNA formyltransferase (308 aa).

111–114 (SLLP) lines the (6S)-5,6,7,8-tetrahydrofolate pocket.

It belongs to the Fmt family.

The enzyme catalyses L-methionyl-tRNA(fMet) + (6R)-10-formyltetrahydrofolate = N-formyl-L-methionyl-tRNA(fMet) + (6S)-5,6,7,8-tetrahydrofolate + H(+). Its function is as follows. Attaches a formyl group to the free amino group of methionyl-tRNA(fMet). The formyl group appears to play a dual role in the initiator identity of N-formylmethionyl-tRNA by promoting its recognition by IF2 and preventing the misappropriation of this tRNA by the elongation apparatus. This Thermodesulfovibrio yellowstonii (strain ATCC 51303 / DSM 11347 / YP87) protein is Methionyl-tRNA formyltransferase.